Reading from the N-terminus, the 187-residue chain is Threonylcarbamoyl-AMP synthase (187 aa).

In terms of domain architecture, YrdC-like spans 4–187; the sequence is TPDLDAAVAT…DARTGQILRD (184 aa).

It belongs to the SUA5 family. TsaC subfamily.

The protein localises to the cytoplasm. It catalyses the reaction L-threonine + hydrogencarbonate + ATP = L-threonylcarbamoyladenylate + diphosphate + H2O. Functionally, required for the formation of a threonylcarbamoyl group on adenosine at position 37 (t(6)A37) in tRNAs that read codons beginning with adenine. Catalyzes the conversion of L-threonine, HCO(3)(-)/CO(2) and ATP to give threonylcarbamoyl-AMP (TC-AMP) as the acyladenylate intermediate, with the release of diphosphate. The chain is Threonylcarbamoyl-AMP synthase from Xanthomonas campestris pv. campestris (strain 8004).